We begin with the raw amino-acid sequence, 173 residues long: Alpha-crystallin A chain (173 aa).

Met1 carries the post-translational modification N-acetylmethionine. The required for complex formation with BFSP1 and BFSP2 stretch occupies residues Met1–Glu63. At Gln6 the chain carries Deamidated glutamine; partial. Phosphoserine is present on Ser45. At Gln50 the chain carries Deamidated glutamine; partial. One can recognise a sHSP domain in the interval Leu52–Ser162. An N6-acetyllysine modification is found at Lys99. His100 provides a ligand contact to Zn(2+). Asn101 bears the Deamidated asparagine; partial mark. Zn(2+) contacts are provided by Glu102 and His107. Position 122 is a phosphoserine (Ser122). Asn123 bears the Deamidated asparagine; partial mark. A disulfide bridge connects residues Cys131 and Cys142. Gln147 carries the post-translational modification Deamidated glutamine; partial. A disordered region spans residues Gln147–Ser173. Positions Ser153–Pro167 are enriched in basic and acidic residues. His154 contributes to the Zn(2+) binding site. Residue Ser162 is glycosylated (O-linked (GlcNAc) serine).

Belongs to the small heat shock protein (HSP20) family. As to quaternary structure, heteromer composed of three CRYAA and one CRYAB subunits. Inter-subunit bridging via zinc ions enhances stability, which is crucial as there is no protein turn over in the lens. Can also form homodimers and homotetramers (dimers of dimers) which serve as the building blocks of homooligomers. Within homooligomers, the zinc-binding motif is created from residues of 3 different molecules. His-100 and Glu-102 from one molecule are ligands of the zinc ion, and His-107 and His-154 residues from additional molecules complete the site with tetrahedral coordination geometry. Part of a complex required for lens intermediate filament formation composed of BFSP1, BFSP2 and CRYAA. Post-translationally, undergoes age-dependent proteolytical cleavage at the C-terminus.

It is found in the cytoplasm. The protein resides in the nucleus. Contributes to the transparency and refractive index of the lens. In its oxidized form (absence of intramolecular disulfide bond), acts as a chaperone, preventing aggregation of various proteins under a wide range of stress conditions. Required for the correct formation of lens intermediate filaments as part of a complex composed of BFSP1, BFSP2 and CRYAA. This is Alpha-crystallin A chain (CRYAA) from Procavia capensis (Rock hyrax).